Consider the following 268-residue polypeptide: Phosphatidylglycerol--prolipoprotein diacylglyceryl transferase (268 aa).

Helical transmembrane passes span 14-34 (LGPI…FAGW), 57-77 (LTFY…IIFY), 90-110 (FFLW…LIAF), and 117-137 (IGAN…IGLG). Position 140 (Arg-140) interacts with a 1,2-diacyl-sn-glycero-3-phospho-(1'-sn-glycerol). Transmembrane regions (helical) follow at residues 174 to 194 (QLFE…LVTI), 200 to 220 (YLVL…CEFF), and 238 to 258 (GQIL…AVFI).

The protein belongs to the Lgt family.

It is found in the cell inner membrane. It catalyses the reaction L-cysteinyl-[prolipoprotein] + a 1,2-diacyl-sn-glycero-3-phospho-(1'-sn-glycerol) = an S-1,2-diacyl-sn-glyceryl-L-cysteinyl-[prolipoprotein] + sn-glycerol 1-phosphate + H(+). The protein operates within protein modification; lipoprotein biosynthesis (diacylglyceryl transfer). Its function is as follows. Catalyzes the transfer of the diacylglyceryl group from phosphatidylglycerol to the sulfhydryl group of the N-terminal cysteine of a prolipoprotein, the first step in the formation of mature lipoproteins. The protein is Phosphatidylglycerol--prolipoprotein diacylglyceryl transferase of Francisella tularensis subsp. mediasiatica (strain FSC147).